The following is a 242-amino-acid chain: Mannose-P-dolichol utilization defect 1 protein homolog (242 aa).

Residues 37 to 95 enclose the PQ-loop 1 domain; it reads LSRGLGFAITLGSILLFVPQILKIQAARSAQGISAASQLLALVGAIGTASYSYRSGFVF. The next 7 membrane-spanning stretches (helical) occupy residues 40–60, 68–88, 98–118, 120–140, 148–168, 180–200, and 207–227; these read GLGF…ILKI, GISA…ASYS, WGDS…IFLF, GQTM…YGVV, TLTA…LLQI, LSLI…FTSV, and LLIV…AQFF. Residues 152–202 enclose the PQ-loop 2 domain; the sequence is VQTAGIPIVVVSKLLQISQNYRAQSTGQLSLISVFLQFAGTLARVFTSVQD.

It belongs to the MPDU1 (TC 2.A.43.3) family.

It is found in the membrane. This chain is Mannose-P-dolichol utilization defect 1 protein homolog, found in Caenorhabditis elegans.